Consider the following 111-residue polypeptide: Probable 4-amino-4-deoxy-L-arabinose-phosphoundecaprenol flippase subunit ArnE (111 aa).

3 consecutive transmembrane segments (helical) span residues 38–58 (LWLG…LLVL), 61–81 (LPVG…TLAA), and 91–111 (PRHW…GSAA). The EamA domain occupies 40–109 (LGLALICMGA…IISGIIILGS (70 aa)).

Belongs to the ArnE family. Heterodimer of ArnE and ArnF.

The protein localises to the cell inner membrane. It participates in bacterial outer membrane biogenesis; lipopolysaccharide biosynthesis. Its function is as follows. Translocates 4-amino-4-deoxy-L-arabinose-phosphoundecaprenol (alpha-L-Ara4N-phosphoundecaprenol) from the cytoplasmic to the periplasmic side of the inner membrane. The polypeptide is Probable 4-amino-4-deoxy-L-arabinose-phosphoundecaprenol flippase subunit ArnE (Salmonella heidelberg (strain SL476)).